A 380-amino-acid polypeptide reads, in one-letter code: Cytochrome b (380 aa).

The next 4 helical transmembrane spans lie at 33 to 53 (FGSL…FLAM), 77 to 98 (WLLR…YLHI), 113 to 133 (WNIG…GYVL), and 178 to 198 (FFTF…LHLL). Histidine 83 and histidine 97 together coordinate heme b. Heme b contacts are provided by histidine 182 and histidine 196. Histidine 201 contributes to the a ubiquinone binding site. The next 4 membrane-spanning stretches (helical) occupy residues 226–246 (YKDL…ALLN), 288–308 (LGGV…PTLH), 320–340 (SSQT…WIGG), and 347–367 (FIII…FFIP).

It belongs to the cytochrome b family. As to quaternary structure, the cytochrome bc1 complex contains 3 respiratory subunits (MT-CYB, CYC1 and UQCRFS1), 2 core proteins (UQCRC1 and UQCRC2) and probably 6 low-molecular weight proteins. Heme b serves as cofactor.

The protein localises to the mitochondrion inner membrane. Its function is as follows. Component of the ubiquinol-cytochrome c reductase complex (complex III or cytochrome b-c1 complex) that is part of the mitochondrial respiratory chain. The b-c1 complex mediates electron transfer from ubiquinol to cytochrome c. Contributes to the generation of a proton gradient across the mitochondrial membrane that is then used for ATP synthesis. This is Cytochrome b (mt-cyb) from Lepisosteus oculatus (Spotted gar).